We begin with the raw amino-acid sequence, 431 residues long: Enolase (431 aa).

Q163 serves as a coordination point for (2R)-2-phosphoglycerate. E205 serves as the catalytic Proton donor. 3 residues coordinate Mg(2+): D242, E288, and D315. Positions 340, 369, 370, and 391 each coordinate (2R)-2-phosphoglycerate. The Proton acceptor role is filled by K340.

Belongs to the enolase family. Mg(2+) serves as cofactor.

It is found in the cytoplasm. It localises to the secreted. The protein resides in the cell surface. The catalysed reaction is (2R)-2-phosphoglycerate = phosphoenolpyruvate + H2O. It participates in carbohydrate degradation; glycolysis; pyruvate from D-glyceraldehyde 3-phosphate: step 4/5. In terms of biological role, catalyzes the reversible conversion of 2-phosphoglycerate (2-PG) into phosphoenolpyruvate (PEP). It is essential for the degradation of carbohydrates via glycolysis. The protein is Enolase of Bacillus anthracis (strain A0248).